The following is a 354-amino-acid chain: Photosystem II D2 protein (354 aa).

An N-acetylthreonine modification is found at Thr2. Position 2 is a phosphothreonine (Thr2). A helical transmembrane segment spans residues 42 to 62 (CAYFALGGFFTGNTFVTSWYT). His119 lines the chlorophyll a pocket. The chain crosses the membrane as a helical span at residues 126–142 (GFMLRQFEIARAVKIRP). Pheophytin a is bound by residues Gln131 and Asn144. A helical transmembrane segment spans residues 154-167 (VFVSVFLIYPLGQQ). His199 serves as a coordination point for chlorophyll a. Residues 209 to 229 (AALLCAIHGATVENTLFEDGD) traverse the membrane as a helical segment. The a plastoquinone site is built by His216 and Phe263. His216 is a binding site for Fe cation. His270 lines the Fe cation pocket. Residues 280–296 (GLWMSAIGVVGLALNLR) traverse the membrane as a helical segment.

This sequence belongs to the reaction center PufL/M/PsbA/D family. In terms of assembly, PSII is composed of 1 copy each of membrane proteins PsbA, PsbB, PsbC, PsbD, PsbE, PsbF, PsbH, PsbI, PsbJ, PsbK, PsbL, PsbM, PsbT, PsbX, PsbY, PsbZ, Psb30/Ycf12, at least 3 peripheral proteins of the oxygen-evolving complex and a large number of cofactors. It forms dimeric complexes. Requires The D1/D2 heterodimer binds P680, chlorophylls that are the primary electron donor of PSII, and subsequent electron acceptors. It shares a non-heme iron and each subunit binds pheophytin, quinone, additional chlorophylls, carotenoids and lipids. There is also a Cl(-1) ion associated with D1 and D2, which is required for oxygen evolution. The PSII complex binds additional chlorophylls, carotenoids and specific lipids. as cofactor.

Its subcellular location is the plastid. The protein localises to the chloroplast thylakoid membrane. The catalysed reaction is 2 a plastoquinone + 4 hnu + 2 H2O = 2 a plastoquinol + O2. Photosystem II (PSII) is a light-driven water:plastoquinone oxidoreductase that uses light energy to abstract electrons from H(2)O, generating O(2) and a proton gradient subsequently used for ATP formation. It consists of a core antenna complex that captures photons, and an electron transfer chain that converts photonic excitation into a charge separation. The D1/D2 (PsbA/PsbD) reaction center heterodimer binds P680, the primary electron donor of PSII as well as several subsequent electron acceptors. D2 is needed for assembly of a stable PSII complex. The protein is Photosystem II D2 protein of Mesostigma viride (Green alga).